Consider the following 1410-residue polypeptide: Slit homolog 1 protein (1410 aa).

Residues 1 to 16 (MLICFIFILLIPESAT) form the signal peptide. Residues 17 to 43 (CPAECVCVDRTVSCVGQQLTEVPQNIP) form the LRRNT 1 domain. 20 LRR repeats span residues 22–42 (VCVD…PQNI), 43–66 (PNDT…DFSS), 67–90 (LMNL…SFSS), 91–114 (LVFL…VFQN), 116–138 (LKLT…QLQG), 140–162 (EFLE…VISS), 163–186 (WVSL…SNAR), 219–242 (TVCA…FMTC), 286–309 (PPST…SFKN), 310–333 (LKNL…AFLG), 335–357 (HNLH…TFEG), 358–381 (LGSL…TFDH), 383–405 (PKLS…TFQN), 407–430 (TSLS…WLAQ), 442–465 (ARCE…KFKC), 489–510 (CDCY…PTSI), 511–535 (PRFA…NIHV), 536–559 (LENL…SFEK), 561–583 (SKLR…VLDE), and 585–607 (SNLE…FFNK). Residues 195–243 (NPWNCDCRLRWMRKWLEKAEGQNKTVCATPLNLQGSSIEILQDKFMTCS) enclose the LRRCT 1 domain. The LRRNT 2 domain maps to 259–286 (ICPLPCTCTGTTVDCRDSGLTYVPTNLP). One can recognise an LRRCT 2 domain in the interval 417 to 466 (NPLICDCNLQWLAQINLQKNIETSGARCEQPKRLRKKKFATLPPNKFKCK). Residues 484-511 (ICPTQCDCYGTTVDCNKRGLNTIPTSIP) enclose the LRRNT 3 domain. The LRRCT 3 domain occupies 619-671 (NDLLCDCRILPLMSWLRSNSSHSIDIPPCQQFQYSDNESDKQRCAAFPEETCS). In terms of domain architecture, LRRNT 4 spans 677-703 (CPPKCSCLDRVVRCSNKNLTSFPSRIP). LRR repeat units follow at residues 681-703 (CSCL…SRIP), 704-726 (FDTT…DLNR), 727-750 (LYSL…TFSN), 752-774 (TRLS…AFNG), 775-798 (LNAL…AFSN), and 800-823 (TSIT…WFSK). Residues 810-859 (NSLYCDCNMAWFSKWIKSKFIEAGIARCEYPNTVSNQLLLTAQPYQFTCD) enclose the LRRCT 4 domain. 2 EGF-like domains span residues 871-906 (DLCL…VHCE) and 908-945 (QIDA…DYCE). Disulfide bonds link Cys873–Cys884, Cys878–Cys894, Cys896–Cys905, Cys912–Cys923, Cys917–Cys933, Cys935–Cys944, Cys951–Cys962, Cys956–Cys971, Cys973–Cys982, Cys989–Cys1002, Cys996–Cys1011, Cys1013–Cys1022, Cys1029–Cys1040, Cys1034–Cys1049, Cys1051–Cys1060, Cys1076–Cys1086, Cys1081–Cys1097, and Cys1099–Cys1108. Residues 947 to 983 (NIDDCVNSKCENGGKCVDLINSYRCDCPMEYEGKHCE) enclose the EGF-like 1; calcium-binding domain. Residues 985-1023 (KLEYCTKKLNPCENNGKCIPINGSYSCMCSPGFTGNNCE) enclose the EGF-like 3 domain. The region spanning 1025 to 1061 (NIDDCKNVECQNGGSCVDGILSYDCLCRPGYAGQYCE) is the EGF-like 2; calcium-binding domain. The region spanning 1072–1109 (KTDACQQSACGQGECVASQNSSDFTCKCHEGFSGPSCD) is the EGF-like 4 domain. Residues 1112-1285 (MSVGFKNPGA…LENVNTEQSC (174 aa)) enclose the Laminin G-like domain. Residues 1197 to 1221 (TSERKCFLQIDKNPVQIVENSGKSD) form an LRR 27 repeat. Intrachain disulfides connect Cys1259/Cys1285, Cys1292/Cys1302, Cys1297/Cys1314, Cys1316/Cys1325, Cys1332/Cys1368, Cys1346/Cys1382, Cys1357/Cys1398, and Cys1361/Cys1400. Residues 1288–1326 (TVNFCAGIDCGNGKCTNNALSPKGYMCQCDSHFSGEHCD) enclose the EGF-like 5 domain. Positions 1332 to 1406 (CDKQKFRRHH…QCQCEPTKSV (75 aa)) constitute a CTCK domain.

In terms of assembly, interacts with eva-1.

It is found in the secreted. Functionally, functions as a ligand for sax-3 receptor during larval development. Acts via the sax-3/Robo receptor to direct ventral axon guidance and guidance at the midline during embryonic development. This chain is Slit homolog 1 protein (slt-1), found in Caenorhabditis elegans.